The chain runs to 691 residues: Proprotein convertase subtilisin/kexin type 9 (691 aa).

Residues Met1–Ala29 form the signal peptide. A propeptide spanning residues Gln30–Gln151 is cleaved from the precursor. Tyr37 carries the post-translational modification Sulfotyrosine. Ser46 is subject to Phosphoserine. Residues Thr76 to Val148 form the Inhibitor I9 domain. In terms of domain architecture, Peptidase S8 spans Pro154–Trp460. Residues Asp185 and His225 each act as charge relay system in the active site. Cystine bridges form between Cys222/Cys254 and Cys322/Cys357. Catalysis depends on Ser385, which acts as the Charge relay system. A C-terminal domain region spans residues Gly449–Gln691. 3 disulfide bridges follow: Cys456-Cys526, Cys476-Cys525, and Cys485-Cys508. Residue Asn532 is glycosylated (N-linked (GlcNAc...) asparagine). Disulfide bonds link Cys533–Cys600, Cys551–Cys599, Cys561–Cys587, Cys607–Cys678, Cys625–Cys677, and Cys634–Cys653. At Ser687 the chain carries Phosphoserine.

Belongs to the peptidase S8 family. In terms of assembly, monomer. Can self-associate to form dimers and higher multimers which may have increased LDLR degrading activity. The precursor protein but not the mature protein may form multimers. Interacts with APOB, VLDLR, LRP8/APOER2 and BACE1. The full-length immature form (pro-PCSK9) interacts with SCNN1A, SCNN1B and SCNN1G. The pro-PCSK9 form (via C-terminal domain) interacts with LDLR. Interacts (via the C-terminal domain) with ANXA2 (via repeat Annexin 1); the interaction inhibits the degradation of LDLR. It depends on Ca(2+) as a cofactor. Post-translationally, cleavage by furin and PCSK5 generates a truncated inactive protein that is unable to induce LDLR degradation. In terms of processing, undergoes autocatalytic cleavage in the endoplasmic reticulum to release the propeptide from the N-terminus and the cleavage of the propeptide is strictly required for its maturation and activation. The cleaved propeptide however remains associated with the catalytic domain through non-covalent interactions, preventing potential substrates from accessing its active site. As a result, it is secreted from cells as a propeptide-containing, enzymatically inactive protein. Phosphorylation protects the propeptide against proteolysis.

It localises to the cytoplasm. It is found in the secreted. The protein localises to the endosome. Its subcellular location is the lysosome. The protein resides in the cell surface. It localises to the endoplasmic reticulum. It is found in the golgi apparatus. With respect to regulation, its proteolytic activity is autoinhibited by the non-covalent binding of the propeptide to the catalytic domain. Inhibited by EGTA. In terms of biological role, crucial player in the regulation of plasma cholesterol homeostasis. Binds to low-density lipid receptor family members: low density lipoprotein receptor (LDLR), very low density lipoprotein receptor (VLDLR), apolipoprotein E receptor (LRP1/APOER) and apolipoprotein receptor 2 (LRP8/APOER2), and promotes their degradation in intracellular acidic compartments. Acts via a non-proteolytic mechanism to enhance the degradation of the hepatic LDLR through a clathrin LDLRAP1/ARH-mediated pathway. May prevent the recycling of LDLR from endosomes to the cell surface or direct it to lysosomes for degradation. Can induce ubiquitination of LDLR leading to its subsequent degradation. Inhibits intracellular degradation of APOB via the autophagosome/lysosome pathway in a LDLR-independent manner. Involved in the disposal of non-acetylated intermediates of BACE1 in the early secretory pathway. Inhibits epithelial Na(+) channel (ENaC)-mediated Na(+) absorption by reducing ENaC surface expression primarily by increasing its proteasomal degradation. Regulates neuronal apoptosis via modulation of LRP8/APOER2 levels and related anti-apoptotic signaling pathways. The polypeptide is Proprotein convertase subtilisin/kexin type 9 (PCSK9) (Saimiri boliviensis boliviensis (Bolivian squirrel monkey)).